The following is a 353-amino-acid chain: Rhodopsin (353 aa).

Topologically, residues 1–36 are extracellular; it reads MNGTEGPFFYVPMVNTTGIVRSPYDYPQYYLVSPAA. Asn2 and Asn15 each carry an N-linked (GlcNAc...) asparagine glycan. The helical transmembrane segment at 37 to 61 threads the bilayer; sequence YAALGAYMFLLILLGFPINFLTLYV. Residues 62-73 are Cytoplasmic-facing; it reads TIEHKKLRTPLN. A helical membrane pass occupies residues 74–96; it reads YILLNLAVADLFMVFGGFTTTMY. The Extracellular segment spans residues 97-110; the sequence is TSMHGYFVLGRLGC. An intrachain disulfide couples Cys110 to Cys187. Residues 111–133 form a helical membrane-spanning segment; that stretch reads NMEGFFATLGGEIGLWSLVVLAV. Positions 134-136 match the 'Ionic lock' involved in activated form stabilization motif; that stretch reads ERW. The Cytoplasmic portion of the chain corresponds to 134 to 152; the sequence is ERWLVVCKPISNFRFGENH. The chain crosses the membrane as a helical span at residues 153-173; the sequence is AIMGLAFTWVMACSCAVPPLV. Residues 174-202 are Extracellular-facing; sequence GWSRYIPEGMQCSCGVDYYTRAEGFNNES. Asn200 carries N-linked (GlcNAc...) asparagine glycosylation. A helical membrane pass occupies residues 203-224; the sequence is FVIYMFACHFIIPMCVVFFCYG. Residues 225-252 are Cytoplasmic-facing; sequence RLLCAVKEAAAAQQESETTQRAEKEVTR. Residues 253–274 form a helical membrane-spanning segment; the sequence is MVVIMGIAFLICWCPYASVAWY. The Extracellular portion of the chain corresponds to 275–286; sequence IFTHQGSEFGPV. A helical transmembrane segment spans residues 287-308; sequence FMTLPAFFAKTSSVYNPLIYIL. Lys296 carries the N6-(retinylidene)lysine modification. At 309–353 the chain is on the cytoplasmic side; sequence MNKQFRHCMITTLCCGKNPFEEEEGASTASKTEASSVSSSSVSPA. 2 S-palmitoyl cysteine lipidation sites follow: Cys322 and Cys323. The disordered stretch occupies residues 331–353; that stretch reads EEGASTASKTEASSVSSSSVSPA. Residues 334 to 353 show a composition bias toward low complexity; that stretch reads ASTASKTEASSVSSSSVSPA.

This sequence belongs to the G-protein coupled receptor 1 family. Opsin subfamily. Phosphorylated on some or all of the serine and threonine residues present in the C-terminal region. In terms of processing, contains one covalently linked retinal chromophore.

Its subcellular location is the membrane. It localises to the cell projection. The protein resides in the cilium. The protein localises to the photoreceptor outer segment. Functionally, photoreceptor required for image-forming vision at low light intensity. While most salt water fish species use retinal as chromophore, most freshwater fish use 3-dehydroretinal, or a mixture of retinal and 3-dehydroretinal. Light-induced isomerization of 11-cis to all-trans retinal triggers a conformational change that activates signaling via G-proteins. Subsequent receptor phosphorylation mediates displacement of the bound G-protein alpha subunit by arrestin and terminates signaling. This chain is Rhodopsin (rho), found in Dicentrarchus labrax (European seabass).